The following is a 510-amino-acid chain: Histidine ammonia-lyase (510 aa).

The segment at residues 143 to 145 (ASG) is a cross-link (5-imidazolinone (Ala-Gly)). Ser144 bears the 2,3-didehydroalanine (Ser) mark.

It belongs to the PAL/histidase family. Post-translationally, contains an active site 4-methylidene-imidazol-5-one (MIO), which is formed autocatalytically by cyclization and dehydration of residues Ala-Ser-Gly.

Its subcellular location is the cytoplasm. It catalyses the reaction L-histidine = trans-urocanate + NH4(+). It functions in the pathway amino-acid degradation; L-histidine degradation into L-glutamate; N-formimidoyl-L-glutamate from L-histidine: step 1/3. This Shewanella piezotolerans (strain WP3 / JCM 13877) protein is Histidine ammonia-lyase.